A 74-amino-acid polypeptide reads, in one-letter code: UPF0435 protein BCB4264_A0471 (74 aa).

This sequence belongs to the UPF0435 family.

The polypeptide is UPF0435 protein BCB4264_A0471 (Bacillus cereus (strain B4264)).